A 590-amino-acid chain; its full sequence is MLSLSQSLDAQLRAAMQRAFPEADAGLDPQLASASKQEFGDFQANGALPLAKPLKQAPRQIATAIVEQLQADPAFTDLCLEPQIAGPGFINLTIRPERLAAEVSARLGDERLGVPAVSNAAPVVVDFSSPNIAKEMHVGHLRSTIIGDSLARVLEFRGHPVLRLNHVGDWGTQFGMLITHLKQVAPEALDTADAVDLGDLVAFYREAKKRFDDDEAFQSTSRDEVVKLQGGDPVSLKAWGLLCDQSRREFQKIYDRLDILLSERGESFYNPFLPAVIDGLKAAELLVTDDGAQCVFLEGVQGKDGKPLPVIVQKSDGGFNYATTDLAAIRYRFGAAPEGDGARRVVYVTDAGQANHFAGVFQVAERAGWIPDGARLEHVPFGLVQGEDGKKLKTRAGDTVRLRDLLDEAVERAETDLRSRLKEEERSESEEFIQHVAGTVGLAAVKYADLSQNRITNYQFSFDRMLALQGNTAPYLLYAVVRIAGIARKGGDLAATNAQLQFSEPQEWALVRELLKFDAVIAEVEEELLPNRLCSYLFELSQVFNRFYDQVPVLKADPEALASRLALCRLTADTLRLGLGLLGIATLDRM.

A 'HIGH' region motif is present at residues 130-140 (PNIAKEMHVGH).

This sequence belongs to the class-I aminoacyl-tRNA synthetase family. Monomer.

The protein resides in the cytoplasm. It carries out the reaction tRNA(Arg) + L-arginine + ATP = L-arginyl-tRNA(Arg) + AMP + diphosphate. In Synechococcus sp. (strain CC9605), this protein is Arginine--tRNA ligase.